Consider the following 139-residue polypeptide: Transcription antitermination protein NusB (139 aa).

This sequence belongs to the NusB family.

In terms of biological role, involved in transcription antitermination. Required for transcription of ribosomal RNA (rRNA) genes. Binds specifically to the boxA antiterminator sequence of the ribosomal RNA (rrn) operons. The chain is Transcription antitermination protein NusB from Cronobacter sakazakii (strain ATCC BAA-894) (Enterobacter sakazakii).